The sequence spans 362 residues: Epoxide hydrolase 4 (362 aa).

Residues 17–37 (SLLFWSLVYCYCGLCASIHLL) traverse the membrane as a helical; Signal-anchor for type II membrane protein segment. Residues 94-211 (PLMLLLHGFP…EYILRHPAQL (118 aa)) enclose the AB hydrolase-1 domain. Asp-169 acts as the Nucleophile in catalysis. The Proton donor role is filled by Tyr-281. His-336 (proton acceptor) is an active-site residue.

Belongs to the AB hydrolase superfamily. Epoxide hydrolase family.

Its subcellular location is the membrane. The chain is Epoxide hydrolase 4 (EPHX4) from Homo sapiens (Human).